A 311-amino-acid chain; its full sequence is CAAX prenyl protease 2 (311 aa).

A run of 3 helical transmembrane segments spans residues 14–34 (VATC…PTVI), 51–71 (FICA…ILPI), and 94–114 (VVYP…LKLF). E164 (proton donor/acceptor) is an active-site residue. Residues 173–193 (IPLLLCAGFRINTAIFLCPVL) form a helical membrane-spanning segment. The Proton donor/acceptor role is filled by H198. The next 3 membrane-spanning stretches (helical) occupy residues 219–239 (IVGL…FLFI), 244–264 (LAAP…VLYA), and 268–288 (GLVS…LFPL).

This sequence belongs to the peptidase U48 family. In terms of tissue distribution, expressed in seeds, stems, leaves, flowers and siliques.

It localises to the endoplasmic reticulum membrane. The enzyme catalyses Hydrolyzes the peptide bond -P2-(S-farnesyl or geranylgeranyl)C-P1'-P2'-P3'-COOH where P1' and P2' are amino acids with aliphatic sidechains and P3' is any C-terminal residue.. Its activity is regulated as follows. Inhibited in vitro by L-1-tosylamido-2-phenylethyl chloromethyl ketone (TPCK) and N-ethylmaleimide, but not by EDTA. Functionally, protease involved in the processing of a variety of prenylated proteins containing the C-terminal CAAX motif, where C is a cysteine modified with an isoprenoid lipid, A is an aliphatic amino acid and X is any C-terminal amino acid. Proteolytically removes the C-terminal three residues of farnesylated and geranylated proteins, leaving the prenylated cysteine as the new C-terminus. The substrate specificity is only partially overlapping with that of FACE1. CAAX processing is likely required for subcellular targeting of prenylated proteins to the plasma membrane. The polypeptide is CAAX prenyl protease 2 (FACE2) (Arabidopsis thaliana (Mouse-ear cress)).